The primary structure comprises 395 residues: Imidazolonepropionase (395 aa).

Positions 63 and 65 each coordinate Fe(3+). The Zn(2+) site is built by His-63 and His-65. 4-imidazolone-5-propanoate-binding residues include Arg-72, Tyr-135, and His-168. Tyr-135 is an N-formimidoyl-L-glutamate binding site. His-233 contributes to the Fe(3+) binding site. His-233 contacts Zn(2+). Gln-236 lines the 4-imidazolone-5-propanoate pocket. Asp-308 lines the Fe(3+) pocket. Asp-308 contacts Zn(2+). Residues Asn-310 and Gly-312 each coordinate N-formimidoyl-L-glutamate. Thr-313 serves as a coordination point for 4-imidazolone-5-propanoate.

This sequence belongs to the metallo-dependent hydrolases superfamily. HutI family. It depends on Zn(2+) as a cofactor. Requires Fe(3+) as cofactor.

It localises to the cytoplasm. It catalyses the reaction 4-imidazolone-5-propanoate + H2O = N-formimidoyl-L-glutamate. The protein operates within amino-acid degradation; L-histidine degradation into L-glutamate; N-formimidoyl-L-glutamate from L-histidine: step 3/3. Functionally, catalyzes the hydrolytic cleavage of the carbon-nitrogen bond in imidazolone-5-propanoate to yield N-formimidoyl-L-glutamate. It is the third step in the universal histidine degradation pathway. This is Imidazolonepropionase from Cereibacter sphaeroides (strain ATCC 17029 / ATH 2.4.9) (Rhodobacter sphaeroides).